Here is a 296-residue protein sequence, read N- to C-terminus: MERTIEKPRIRVSADNRAFLETSRLVSACGLNTVCQEAACPNISECWSSKHVTVMILGSVCTRACRFCNVTTGKPELLDPHEPEKLASAVGKLGLRHVVITSVDRDDLDDGGAEHFASCVRRIRETSPGTSIEVLTPDFLGKVGARDIIIAAAPDVFNHNVETVPRLHPKIRIKARYFNSLSLLEEVKRKDPRIFTKSGLMLGLGEERSEVLQVMDDMRVAGIDFLTIGQYLRPSKKHMEVQRYATDEEFQYYKEAAYARGFLMVASSALTRSSYHADEDFLHLKNARAGALAKLV.

[4Fe-4S] cluster-binding residues include Cys35, Cys40, Cys46, Cys61, Cys65, Cys68, and Ser274. A Radical SAM core domain is found at 47 to 263 (WSSKHVTVMI…KEAAYARGFL (217 aa)).

This sequence belongs to the radical SAM superfamily. Lipoyl synthase family. Requires [4Fe-4S] cluster as cofactor.

Its subcellular location is the cytoplasm. It catalyses the reaction [[Fe-S] cluster scaffold protein carrying a second [4Fe-4S](2+) cluster] + N(6)-octanoyl-L-lysyl-[protein] + 2 oxidized [2Fe-2S]-[ferredoxin] + 2 S-adenosyl-L-methionine + 4 H(+) = [[Fe-S] cluster scaffold protein] + N(6)-[(R)-dihydrolipoyl]-L-lysyl-[protein] + 4 Fe(3+) + 2 hydrogen sulfide + 2 5'-deoxyadenosine + 2 L-methionine + 2 reduced [2Fe-2S]-[ferredoxin]. It functions in the pathway protein modification; protein lipoylation via endogenous pathway; protein N(6)-(lipoyl)lysine from octanoyl-[acyl-carrier-protein]: step 2/2. Functionally, catalyzes the radical-mediated insertion of two sulfur atoms into the C-6 and C-8 positions of the octanoyl moiety bound to the lipoyl domains of lipoate-dependent enzymes, thereby converting the octanoylated domains into lipoylated derivatives. This Neorickettsia sennetsu (strain ATCC VR-367 / Miyayama) (Ehrlichia sennetsu) protein is Lipoyl synthase.